Here is a 75-residue protein sequence, read N- to C-terminus: Large ribosomal subunit protein bL31 (75 aa).

The protein belongs to the bacterial ribosomal protein bL31 family. Type A subfamily. Part of the 50S ribosomal subunit.

Functionally, binds the 23S rRNA. This is Large ribosomal subunit protein bL31 from Chlorobium luteolum (strain DSM 273 / BCRC 81028 / 2530) (Pelodictyon luteolum).